Consider the following 546-residue polypeptide: Immunoglobulin heavy constant epsilon (546 aa).

The Extracellular segment spans residues 1–499 (ASTQSPSVFP…EAPWTWTGLC (499 aa)). Ig-like domains lie at 6 to 103 (PSVF…KTFS), 112 to 210 (PTVK…KKCA), 214 to 318 (PRGV…TKTS), and 324 to 423 (PEVY…RAVS). 5 disulfides stabilise this stretch: Cys15-Cys105, Cys29-Cys85, Cys135-Cys193, Cys239-Cys299, and Cys345-Cys405. 7 N-linked (GlcNAc...) asparagine glycosylation sites follow: Asn21, Asn49, Asn99, Asn146, Asn252, Asn264, and Asn275. Residues 500 to 520 (IFAALFLLSVSYSAAITLLMV) traverse the membrane as a helical segment. Residues 521–546 (QRFLSATRQGRPQTSLDYTNVLQPHA) lie on the Cytoplasmic side of the membrane.

The basic structural unit of both sIgE and mIgE molecules consists of two identical heavy chains and two identical light chains; disulfide-linked. N-terminal variable regions of the heavy and light chains form the antigen binding sites, whereas the C-terminal constant regions of the heavy chains interact with immune receptors to mediate effector functions. In terms of assembly, part of IgE antibody. Interacts (via CH3) with the alpha chain/FCE1RA of IgE Fc receptor complex. Interacts (via CH3 region) with FCER2 (via C-type lectin domain); this interaction regulates IgE homeostasis. As to quaternary structure, part of IgE B cell antigen receptor complex (BCR). The BCR complex consists of one mIgE molecule responsible for antigen binding, non-covalently associated with CD79A and CD79B signaling chains. As to expression, expressed in B lymphocytes stimulated with IL4 and CD40.

It localises to the secreted. Its subcellular location is the cell membrane. Functionally, constant region of immunoglobulin heavy chains. Immunoglobulins, also known as antibodies, are membrane-bound or secreted glycoproteins produced by B lymphocytes. In the recognition phase of humoral immunity, the membrane-bound immunoglobulins serve as receptors which, upon binding of a specific antigen, trigger the clonal expansion and differentiation of B lymphocytes into immunoglobulins-secreting plasma cells. Secreted immunoglobulins mediate the effector phase of humoral immunity, which results in the elimination of bound antigens. The antigen binding site is formed by the variable domain of one heavy chain, together with that of its associated light chain. Thus, each immunoglobulin has two antigen binding sites with remarkable affinity for a particular antigen. The variable domains are assembled by a process called V-(D)-J rearrangement and can then be subjected to somatic hypermutations which, after exposure to antigen and selection, allow affinity maturation for a particular antigen. Constant region of secreted IgE, also known as the Fc region of IgE antibody. Mediates IgE effector functions on myeloid and lymphoid cells primarily via two Fc receptors, the high-affinity IgE Fc receptor complex/FCER1A:MS4A2:FCGR1A and the low-affinity FCER2 receptor, which upon antigen/allergen cross-linking initiate signaling pathways that lead to immune cell activation and differentiation. Triggers the immediate hypersensitivity response to allergens as a host defense mechanism against helminth parasites, pathogenic bacteria and venom toxicity. When dysregulated, it can elicit harmful life-threatening allergic and anaphylactic reactions. Stimulates the high-affinity IgE Fc receptor complex/FCER1A:MS4A2:FCGR1A on mast cells, basophils and eosinophils leading to secretion of vasoactive amines, lipid mediators and cytokines that contribute to inflammatory response, tissue remodeling and cytotoxicity against microbes. On macrophages, cross-linking of FCER2 by IgE immune complexes induces intracellular killing of parasites through activation of L-Arginine-nitric oxide pathway. Activates macrophages to kill tumor cells via antigen-specific antibody-dependent cytotoxicity (ADCC). Triggers differentiation of quiescent M0 macrophages toward M1 state and reprograms M2 macrophages toward a proinflammatory state with antitumor functions. Stimulates FCER2 on B cells and initiates IgE-dependent antigen uptake and presentation to T cells. In terms of biological role, constant region of membrane-bound IgE (long mIgE), part of the B cell receptor complex (BCR). Upon antigen cross-linking triggers quick BCR signaling, ensuring survival of IgE-switched B cells and differentiation into plasma cells, thus regulating both primary and memory IgE responses. Its function is as follows. Constant region of membrane-bound IgE (short mIgE), part of the B cell receptor complex (BCR). Upon antigen cross-linking initiates slower but sustained BCR signaling that negatively regulates mature B cell proliferation. The protein is Immunoglobulin heavy constant epsilon of Homo sapiens (Human).